A 426-amino-acid polypeptide reads, in one-letter code: Glutamate-1-semialdehyde 2,1-aminomutase (426 aa).

K265 is modified (N6-(pyridoxal phosphate)lysine).

Belongs to the class-III pyridoxal-phosphate-dependent aminotransferase family. HemL subfamily. As to quaternary structure, homodimer. Pyridoxal 5'-phosphate is required as a cofactor.

It localises to the cytoplasm. The enzyme catalyses (S)-4-amino-5-oxopentanoate = 5-aminolevulinate. Its pathway is porphyrin-containing compound metabolism; protoporphyrin-IX biosynthesis; 5-aminolevulinate from L-glutamyl-tRNA(Glu): step 2/2. This Salmonella arizonae (strain ATCC BAA-731 / CDC346-86 / RSK2980) protein is Glutamate-1-semialdehyde 2,1-aminomutase.